Consider the following 869-residue polypeptide: DNA mismatch repair protein MutS (869 aa).

602–609 (GPNMSGKS) is an ATP binding site.

This sequence belongs to the DNA mismatch repair MutS family.

Functionally, this protein is involved in the repair of mismatches in DNA. It is possible that it carries out the mismatch recognition step. This protein has a weak ATPase activity. This Staphylococcus carnosus (strain TM300) protein is DNA mismatch repair protein MutS.